Reading from the N-terminus, the 286-residue chain is Polyamine aminopropyltransferase 1 (286 aa).

Residues 1 to 235 (MSDYQETLYQ…GAMTFAWGST (235 aa)) form the PABS domain. An S-methyl-5'-thioadenosine-binding site is contributed by glutamine 30. Histidine 61 and aspartate 85 together coordinate spermidine. Residues glutamate 105 and 137 to 138 (DG) each bind S-methyl-5'-thioadenosine. Aspartate 155 acts as the Proton acceptor in catalysis. 155-158 (DSTD) contacts spermidine. Proline 162 serves as a coordination point for S-methyl-5'-thioadenosine.

Belongs to the spermidine/spermine synthase family. As to quaternary structure, homodimer or homotetramer.

It localises to the cytoplasm. It carries out the reaction S-adenosyl 3-(methylsulfanyl)propylamine + putrescine = S-methyl-5'-thioadenosine + spermidine + H(+). The protein operates within amine and polyamine biosynthesis; spermidine biosynthesis; spermidine from putrescine: step 1/1. Catalyzes the irreversible transfer of a propylamine group from the amino donor S-adenosylmethioninamine (decarboxy-AdoMet) to putrescine (1,4-diaminobutane) to yield spermidine. In Pseudomonas aeruginosa (strain ATCC 15692 / DSM 22644 / CIP 104116 / JCM 14847 / LMG 12228 / 1C / PRS 101 / PAO1), this protein is Polyamine aminopropyltransferase 1.